An 86-amino-acid chain; its full sequence is Small ribosomal subunit protein bS16 (86 aa).

The protein belongs to the bacterial ribosomal protein bS16 family.

The polypeptide is Small ribosomal subunit protein bS16 (Hamiltonella defensa subsp. Acyrthosiphon pisum (strain 5AT)).